Reading from the N-terminus, the 382-residue chain is Carbamoyl phosphate synthase small chain (382 aa).

Residues 1–189 (MIKSALLVLE…GLPEAKKEDE (189 aa)) are CPSase. 3 residues coordinate L-glutamine: Ser47, Gly241, and Gly243. The Glutamine amidotransferase type-1 domain occupies 193–380 (HVVAYDFGAK…IALIEQYRKT (188 aa)). The Nucleophile role is filled by Cys269. The L-glutamine site is built by Leu270, Gln273, Asn311, Gly313, and Phe314. Catalysis depends on residues His353 and Glu355.

This sequence belongs to the CarA family. In terms of assembly, composed of two chains; the small (or glutamine) chain promotes the hydrolysis of glutamine to ammonia, which is used by the large (or ammonia) chain to synthesize carbamoyl phosphate. Tetramer of heterodimers (alpha,beta)4.

The catalysed reaction is hydrogencarbonate + L-glutamine + 2 ATP + H2O = carbamoyl phosphate + L-glutamate + 2 ADP + phosphate + 2 H(+). It carries out the reaction L-glutamine + H2O = L-glutamate + NH4(+). It functions in the pathway amino-acid biosynthesis; L-arginine biosynthesis; carbamoyl phosphate from bicarbonate: step 1/1. It participates in pyrimidine metabolism; UMP biosynthesis via de novo pathway; (S)-dihydroorotate from bicarbonate: step 1/3. Functionally, small subunit of the glutamine-dependent carbamoyl phosphate synthetase (CPSase). CPSase catalyzes the formation of carbamoyl phosphate from the ammonia moiety of glutamine, carbonate, and phosphate donated by ATP, constituting the first step of 2 biosynthetic pathways, one leading to arginine and/or urea and the other to pyrimidine nucleotides. The small subunit (glutamine amidotransferase) binds and cleaves glutamine to supply the large subunit with the substrate ammonia. This is Carbamoyl phosphate synthase small chain from Escherichia coli O6:H1 (strain CFT073 / ATCC 700928 / UPEC).